Reading from the N-terminus, the 62-residue chain is Sperm protamine P1 (62 aa).

Positions methionine 1–tyrosine 62 are disordered.

This sequence belongs to the protamine P1 family. As to expression, testis.

The protein resides in the nucleus. The protein localises to the chromosome. Protamines substitute for histones in the chromatin of sperm during the haploid phase of spermatogenesis. They compact sperm DNA into a highly condensed, stable and inactive complex. This chain is Sperm protamine P1 (PRM1), found in Dorcopsulus vanheurni (Lesser forest wallaby).